A 450-amino-acid chain; its full sequence is Trehalose/maltose-binding protein MalE (450 aa).

The signal sequence occupies residues 1–24 (MNVKKVLLGLFLVGVLGIAVVASG). Residues glutamate 57, threonine 84, arginine 89, aspartate 110, tyrosine 161, aspartate 163, tyrosine 217, glutamate 279, tryptophan 297, tyrosine 299, glycine 334, tryptophan 335, tryptophan 371, and arginine 404 each coordinate alpha,alpha-trehalose.

Belongs to the bacterial solute-binding protein 1 family. In terms of assembly, the complex is composed of two ATP-binding proteins (MalK), two transmembrane proteins (MalG and MalF) and a solute-binding protein (MalE). Glycosylated.

It is found in the cell membrane. Part of the ABC transporter complex MalEFGK involved in trehalose/maltose import. Binds maltose and trehalose. In Thermococcus litoralis (strain ATCC 51850 / DSM 5473 / JCM 8560 / NS-C), this protein is Trehalose/maltose-binding protein MalE (malE).